Here is a 490-residue protein sequence, read N- to C-terminus: MTNFEVRQYDAAGRLGELTVPRAGVTVETPTILPVVNPHVQTVAPATLASEFGAEILITNSYILHGSDDLREPVLEQGLHDLLGFDGAIMTDSGSFQLAEYGDIDVTTEEILEFQHEIGSDIGTPVDIPTPPDVDRERATEELKTTQERLEHAATVDTGEMLVSAPVQGATYPDLRERAAADAVSTGLDVFPLGAVVPLMNEYRYADLADVVAACKRGLGEVGPVHLFGAGHPMMFAMAAALGCDLFDSAAYALYARDDRYLTVQGTELLDELSYFPCHCPVCTDHTPAELDAMDADAREELLARHNLHVTYGEIRTVKQAIRSGNLMELVDSRARGHPEMLDGYRALLDHSEQLERTDPVSKDAFFYTSTESARRPEVRRHQDRLERLPVEGEEVLLTEGSSSAQYDESWGVLPPFGPYPRELADTYPLTAETPDRTDRAAYEAAATGVRRLVELHPDVSFTLVHDDWPATALDRVPEGVRLRDLHARD.

Residue aspartate 92 is the Nucleophile of the active site. Aspartate 127 and alanine 195 together coordinate substrate. Cysteine 278, cysteine 280, and cysteine 283 together coordinate Zn(2+).

Belongs to the archaeosine tRNA-ribosyltransferase family. Zn(2+) serves as cofactor.

The catalysed reaction is guanosine(15) in tRNA + 7-cyano-7-deazaguanine = 7-cyano-7-carbaguanosine(15) in tRNA + guanine. Its pathway is tRNA modification; archaeosine-tRNA biosynthesis. Functionally, exchanges the guanine residue with 7-cyano-7-deazaguanine (preQ0) at position 15 in the dihydrouridine loop (D-loop) of archaeal tRNAs. The chain is tRNA-guanine(15) transglycosylase from Haloarcula marismortui (strain ATCC 43049 / DSM 3752 / JCM 8966 / VKM B-1809) (Halobacterium marismortui).